The primary structure comprises 206 residues: Small ribosomal subunit protein uS4 (206 aa).

Over residues 1–16 (MTKRQESKYKIDRRMG) the composition is skewed to basic and acidic residues. The tract at residues 1 to 46 (MTKRQESKYKIDRRMGENIWGRPKSPVNRREYGPGQHGQRRKGKLS) is disordered. The region spanning 94 to 154 (RRLDAVVYRA…EKSKQLAIVL (61 aa)) is the S4 RNA-binding domain.

This sequence belongs to the universal ribosomal protein uS4 family. In terms of assembly, part of the 30S ribosomal subunit. Contacts protein S5. The interaction surface between S4 and S5 is involved in control of translational fidelity.

In terms of biological role, one of the primary rRNA binding proteins, it binds directly to 16S rRNA where it nucleates assembly of the body of the 30S subunit. Functionally, with S5 and S12 plays an important role in translational accuracy. This Parvibaculum lavamentivorans (strain DS-1 / DSM 13023 / NCIMB 13966) protein is Small ribosomal subunit protein uS4.